The primary structure comprises 412 residues: O-acetyl-L-homoserine sulfhydrylase 2 (412 aa).

Position 202 is an N6-(pyridoxal phosphate)lysine (Lys-202).

It belongs to the trans-sulfuration enzymes family. Homotetramer. Requires pyridoxal 5'-phosphate as cofactor.

It catalyses the reaction O-acetyl-L-homoserine + hydrogen sulfide = L-homocysteine + acetate. Its activity is regulated as follows. Inhibited by the carbonyl reagents hydroxylamine and phenylhydrazine. Also inhibited by methionine and propargylglycine. Catalyzes the conversion of O-acetyl-L-homoserine (OAH) into homocysteine in the methionine biosynthesis pathway. Has weak activity with O-acetyl-L-serine, O-phospho-L-serine, L-serine, O-succinyl-L-homoserine and L-homoserine. Shows a very low CTT gamma-synthase activity. The sequence is that of O-acetyl-L-homoserine sulfhydrylase 2 from Thermus thermophilus (strain ATCC 27634 / DSM 579 / HB8).